The chain runs to 194 residues: Translation machinery-associated protein 22 (194 aa).

An SUI1 domain is found at 102 to 173 (VQIKRVERNK…DVQDWLLEVY (72 aa)).

This sequence belongs to the DENR family. Interacts with the 40S ribosomal subunit.

It localises to the cytoplasm. This chain is Translation machinery-associated protein 22 (tma22), found in Aspergillus oryzae (strain ATCC 42149 / RIB 40) (Yellow koji mold).